A 102-amino-acid chain; its full sequence is Protein CASC2, isoform 3 (102 aa).

As to expression, expressed in normal and neoplastic endometrial tissues.

In terms of biological role, may act as a potential tumor suppressor. The protein is Protein CASC2, isoform 3 (CASC2) of Homo sapiens (Human).